The primary structure comprises 248 residues: Small ribosomal subunit protein uS3 (248 aa).

One can recognise a KH type-2 domain in the interval 39–107 (IRQMLLKQLK…EVFINIVEIR (69 aa)). Positions 214 to 248 (AVDKRMTAESEGPSSGRPPRRDRDRDRDRDRDSAA) are disordered. Basic and acidic residues predominate over residues 232-248 (PRRDRDRDRDRDRDSAA).

Belongs to the universal ribosomal protein uS3 family. In terms of assembly, part of the 30S ribosomal subunit. Forms a tight complex with proteins S10 and S14.

In terms of biological role, binds the lower part of the 30S subunit head. Binds mRNA in the 70S ribosome, positioning it for translation. In Azorhizobium caulinodans (strain ATCC 43989 / DSM 5975 / JCM 20966 / LMG 6465 / NBRC 14845 / NCIMB 13405 / ORS 571), this protein is Small ribosomal subunit protein uS3.